Reading from the N-terminus, the 556-residue chain is CDP-diacylglycerol--glycerol-3-phosphate 3-phosphatidyltransferase, mitochondrial (556 aa).

The transit peptide at 1 to 28 (MAAAAAAAAGPVFWRRLLGLLPGRPGLA) directs the protein to the mitochondrion. Ser-49 bears the Phosphoserine mark. 124 to 131 (ASLYLGIG) serves as a coordination point for ATP. 2 consecutive PLD phosphodiesterase domains span residues 215–241 (TIGL…SDSY) and 419–457 (FGAK…LQEY). Catalysis depends on residues His-220, Lys-222, and Asp-227.

This sequence belongs to the CDP-alcohol phosphatidyltransferase class-II family.

It localises to the mitochondrion. It catalyses the reaction a CDP-1,2-diacyl-sn-glycerol + sn-glycerol 3-phosphate = a 1,2-diacyl-sn-glycero-3-phospho-(1'-sn-glycero-3'-phosphate) + CMP + H(+). It functions in the pathway phospholipid metabolism; phosphatidylglycerol biosynthesis; phosphatidylglycerol from CDP-diacylglycerol: step 1/2. Activated by calcium and magnesium and inhibited by other bivalent cations. Its function is as follows. Functions in the biosynthesis of the anionic phospholipids phosphatidylglycerol and cardiolipin. The chain is CDP-diacylglycerol--glycerol-3-phosphate 3-phosphatidyltransferase, mitochondrial (PGS1) from Bos taurus (Bovine).